Reading from the N-terminus, the 196-residue chain is ATP-dependent Clp protease proteolytic subunit 1 (196 aa).

The Nucleophile role is filled by Ser96. The active site involves His121.

The protein belongs to the peptidase S14 family. Fourteen ClpP subunits assemble into 2 heptameric rings which stack back to back to give a disk-like structure with a central cavity, resembling the structure of eukaryotic proteasomes.

It is found in the cytoplasm. It catalyses the reaction Hydrolysis of proteins to small peptides in the presence of ATP and magnesium. alpha-casein is the usual test substrate. In the absence of ATP, only oligopeptides shorter than five residues are hydrolyzed (such as succinyl-Leu-Tyr-|-NHMec, and Leu-Tyr-Leu-|-Tyr-Trp, in which cleavage of the -Tyr-|-Leu- and -Tyr-|-Trp bonds also occurs).. Cleaves peptides in various proteins in a process that requires ATP hydrolysis. Has a chymotrypsin-like activity. Plays a major role in the degradation of misfolded proteins. This is ATP-dependent Clp protease proteolytic subunit 1 from Prochlorococcus marinus subsp. pastoris (strain CCMP1986 / NIES-2087 / MED4).